Consider the following 103-residue polypeptide: UPF0145 protein BLi01945/BL05168 (103 aa).

It belongs to the UPF0145 family.

The polypeptide is UPF0145 protein BLi01945/BL05168 (Bacillus licheniformis (strain ATCC 14580 / DSM 13 / JCM 2505 / CCUG 7422 / NBRC 12200 / NCIMB 9375 / NCTC 10341 / NRRL NRS-1264 / Gibson 46)).